Consider the following 328-residue polypeptide: P2Y purinoceptor 6 (328 aa).

Residues 1–27 (MEQDNGTIQAPGLPPTTCVYREDFKRL) are Extracellular-facing. N-linked (GlcNAc...) asparagine glycosylation is present at Asn5. A helical membrane pass occupies residues 28–48 (LLTPVYSVVLVVGLPLNICVI). Residues 49–62 (AQICASRRTLTRSA) lie on the Cytoplasmic side of the membrane. The helical transmembrane segment at 63–83 (VYTLNLALADLMYACSLPLLI) threads the bilayer. The Extracellular segment spans residues 84–101 (YNYARGDHWPFGDLACRF). A disulfide bond links Cys99 and Cys177. The chain crosses the membrane as a helical span at residues 102 to 122 (VRFLFYANLHGSILFLTCISF). Topologically, residues 123–144 (QRYLGICHPLASWHKRGGRRAA) are cytoplasmic. The helical transmembrane segment at 145-165 (WVVCGVVWLAVTAQCLPTAVF) threads the bilayer. The Extracellular segment spans residues 166 to 194 (AATGIQRNRTVCYDLSPPILSTRYLPYGM). A glycan (N-linked (GlcNAc...) asparagine) is linked at Asn173. Residues 195–215 (ALTVIGFLLPFIALLACYCRM) traverse the membrane as a helical segment. Topologically, residues 216–236 (ARRLCRQDGPAGPVAQERRSK) are cytoplasmic. The helical transmembrane segment at 237–257 (AARMAVVVAAVFAISFLPFHI) threads the bilayer. Over 258 to 280 (TKTAYLAVRSTPGVSCPVLETFA) the chain is Extracellular. Residues 281 to 303 (AAYKGTRPFASVNSVLDPILFYF) traverse the membrane as a helical segment. Residues 304–328 (TQQKFRRQPHDLLQRLTAKWQRQRV) lie on the Cytoplasmic side of the membrane.

Belongs to the G-protein coupled receptor 1 family.

It is found in the cell membrane. Its function is as follows. Receptor for extracellular UTP &gt; ADP = 2-methylthio-ATP &gt; ADP-beta-S &gt; ATP = ATP-gamma-S. The activity of this receptor is mediated by G proteins which activate a phosphatidylinositol-calcium second messenger system. Functionally coupled to phospholipase C. This is P2Y purinoceptor 6 (P2ry6) from Mus musculus (Mouse).